The sequence spans 341 residues: Probable 2' cyclic ADP-D-ribose synthase TcpO (341 aa).

Residues 204–336 (KEYDIFVSHS…EIIHEILERI (133 aa)) enclose the TIR domain. NAD(+) is bound by residues 213 to 214 (SS) and lysine 243. Glutamate 279 is a catalytic residue.

The enzyme catalyses NAD(+) + H2O = ADP-D-ribose + nicotinamide + H(+). It carries out the reaction NAD(+) = 2'cADPR + nicotinamide + H(+). Its function is as follows. NAD(+) hydrolase (NADase) that catalyzes cleavage of NAD(+) into ADP-D-ribose (ADPR) and nicotinamide. In addition to ADPR, also generates a cyclization variant of cyclic ADPR (cADPR), termed v-cADPR (probably 2'cADPR). This Methanobrevibacter olleyae protein is Probable 2' cyclic ADP-D-ribose synthase TcpO.